A 119-amino-acid chain; its full sequence is HTH-type transcriptional regulator SarX (119 aa).

A DNA-binding region (H-T-H motif) is located at residues L55–E78.

The protein belongs to the SarA family.

It localises to the cytoplasm. Functionally, involved in the regulation of virulence genes. Acts as a repressor of the agr locus and consequently targets genes regulated by the agr system such as sspA, hla and hlb. Binds directly to the agr promoter region. This Staphylococcus aureus (strain bovine RF122 / ET3-1) protein is HTH-type transcriptional regulator SarX (sarX).